We begin with the raw amino-acid sequence, 668 residues long: Threonine--tRNA ligase (668 aa).

In terms of domain architecture, TGS spans 1–64; sequence MSQAISLTFP…TDGKIEIITR (64 aa). The tract at residues 245-553 is catalytic; that stretch reads DHRKLGREMD…LIENFAGHMP (309 aa). Zn(2+)-binding residues include Cys347, His398, and His530.

The protein belongs to the class-II aminoacyl-tRNA synthetase family. As to quaternary structure, homodimer. Zn(2+) is required as a cofactor.

Its subcellular location is the cytoplasm. The enzyme catalyses tRNA(Thr) + L-threonine + ATP = L-threonyl-tRNA(Thr) + AMP + diphosphate + H(+). Catalyzes the attachment of threonine to tRNA(Thr) in a two-step reaction: L-threonine is first activated by ATP to form Thr-AMP and then transferred to the acceptor end of tRNA(Thr). Also edits incorrectly charged L-seryl-tRNA(Thr). This is Threonine--tRNA ligase from Rhizobium etli (strain CIAT 652).